The following is a 215-amino-acid chain: Adenylate kinase (215 aa).

Residue 10-15 (GAGKGT) coordinates ATP. The interval 30-59 (STGDMLRAAIKAGTPLGLEAKKIIDEGGLV) is NMP. Residues Thr31, Arg36, 57–59 (GLV), 85–88 (GFPR), and Gln92 contribute to the AMP site. An LID region spans residues 122 to 159 (GRRVHLASGRTYHVTYNPPKVEGKDDVTGEDLIQRDDD). ATP-binding positions include Arg123 and 132–133 (TY). AMP contacts are provided by Arg156 and Arg167. Gln200 lines the ATP pocket.

This sequence belongs to the adenylate kinase family. Monomer.

The protein resides in the cytoplasm. The catalysed reaction is AMP + ATP = 2 ADP. It functions in the pathway purine metabolism; AMP biosynthesis via salvage pathway; AMP from ADP: step 1/1. Its function is as follows. Catalyzes the reversible transfer of the terminal phosphate group between ATP and AMP. Plays an important role in cellular energy homeostasis and in adenine nucleotide metabolism. This is Adenylate kinase from Neisseria meningitidis serogroup B (strain ATCC BAA-335 / MC58).